A 1022-amino-acid chain; its full sequence is Translation initiation factor IF-2 (1022 aa).

Residues 82–94 (EQSRKTLEKEQHL) are compositionally biased toward basic and acidic residues. 2 disordered regions span residues 82 to 129 (EQSR…AVPA) and 342 to 436 (SENK…QREL). The span at 104-115 (ASKSSAKGSESA) shows a compositional bias: low complexity. The span at 375 to 384 (KAKKGKKKKK) shows a compositional bias: basic residues. The segment covering 421–436 (SEREREQEEGAAQREL) has biased composition (basic and acidic residues). The tr-type G domain occupies 519–689 (TRPPVVTIMG…LTEAELRELK (171 aa)). The segment at 528–535 (GHVDHGKT) is G1. 528-535 (GHVDHGKT) is a binding site for GTP. The tract at residues 553-557 (GITQH) is G2. Positions 575-578 (DTPG) are G3. GTP contacts are provided by residues 575-579 (DTPGH) and 629-632 (NKID). A G4 region spans residues 629–632 (NKID). Residues 665 to 667 (SAK) are G5.

The protein belongs to the TRAFAC class translation factor GTPase superfamily. Classic translation factor GTPase family. IF-2 subfamily.

Its subcellular location is the cytoplasm. Functionally, one of the essential components for the initiation of protein synthesis. Protects formylmethionyl-tRNA from spontaneous hydrolysis and promotes its binding to the 30S ribosomal subunits. Also involved in the hydrolysis of GTP during the formation of the 70S ribosomal complex. This is Translation initiation factor IF-2 from Chlorobium chlorochromatii (strain CaD3).